Here is a 322-residue protein sequence, read N- to C-terminus: tRNA-dihydrouridine synthase B (322 aa).

FMN-binding positions include 16-18 (PMA) and glutamine 70. Cysteine 100 acts as the Proton donor in catalysis. FMN contacts are provided by residues lysine 139, 200–202 (NGD), and 224–225 (GR).

The protein belongs to the Dus family. DusB subfamily. The cofactor is FMN.

The catalysed reaction is a 5,6-dihydrouridine in tRNA + NAD(+) = a uridine in tRNA + NADH + H(+). It catalyses the reaction a 5,6-dihydrouridine in tRNA + NADP(+) = a uridine in tRNA + NADPH + H(+). In terms of biological role, catalyzes the synthesis of 5,6-dihydrouridine (D), a modified base found in the D-loop of most tRNAs, via the reduction of the C5-C6 double bond in target uridines. This Vibrio parahaemolyticus serotype O3:K6 (strain RIMD 2210633) protein is tRNA-dihydrouridine synthase B.